The following is a 330-amino-acid chain: Protein IN CHLOROPLAST ATPASE BIOGENESIS, chloroplastic (330 aa).

The transit peptide at 1–35 directs the protein to the chloroplast; the sequence is MGSISMHITPSTALPIRHFRARVSCCSSGHVSFIK.

Interacts with ATPC1.

Its subcellular location is the plastid. The protein localises to the chloroplast stroma. Functionally, involved in the assembly of the F(1) ATP synthase in chloroplast thylakoid membranes. Functions downstream of the CPN60 chaperones to promote assembly of the catalytically active core of the chloroplast ATP synthase. Assists the assembly of the ATP synthase gamma subunit into the active F(1) core downstream of CPN60-mediated folding, which is critical for the biogenesis of the chloroplast ATP synthase. The polypeptide is Protein IN CHLOROPLAST ATPASE BIOGENESIS, chloroplastic (Arabidopsis thaliana (Mouse-ear cress)).